A 305-amino-acid chain; its full sequence is NADH-cytochrome b5 reductase 1 (305 aa).

The chain crosses the membrane as a helical span at residues 8–28; sequence VLLASLGVGLLTLLGVALGAY. Positions 44-156 constitute an FAD-binding FR-type domain; sequence NEKYQLRLLD…RGPSGLLTYA (113 aa). Residues 136–166 and 175–210 contribute to the FAD site; these read DSLKIGDVVEFRGPSGLLTYAGKGKFNIQPN and VARNLGMIAGGTGITPMLQLIRAILKDPEDPTQCFL.

The protein belongs to the flavoprotein pyridine nucleotide cytochrome reductase family. It depends on FAD as a cofactor.

It localises to the membrane. The catalysed reaction is 2 Fe(III)-[cytochrome b5] + NADH = 2 Fe(II)-[cytochrome b5] + NAD(+) + H(+). In terms of biological role, NADH-cytochrome b5 reductases are involved in desaturation and elongation of fatty acids, cholesterol biosynthesis, drug metabolism, and, in erythrocyte, methemoglobin reduction. The chain is NADH-cytochrome b5 reductase 1 (CYB5R1) from Bos taurus (Bovine).